A 240-amino-acid chain; its full sequence is Cysteine-rich secretory protein (240 aa).

The signal sequence occupies residues 1 to 19; the sequence is MIAFIVLPILAAVLQQSSG. Positions 38-166 constitute an SCP domain; sequence VDLHNSLRRS…EYSYFYVCQY (129 aa). Cystine bridges form between C75–C153, C92–C167, C148–C164, C186–C193, C189–C198, C202–C235, C211–C229, and C220–C233. In terms of domain architecture, ShKT spans 202–235; sequence CTKEDKYSNCKSLVQQAGCQDKQMQSDCSAICFC.

Belongs to the CRISP family. As to expression, expressed by the venom gland.

The protein resides in the secreted. Weakly blocks contraction of smooth muscle elicited by high potassium-induced depolarization, but does not block caffeine-stimulated contraction. May target voltage-gated calcium channels on smooth muscle. The protein is Cysteine-rich secretory protein of Crotalus adamanteus (Eastern diamondback rattlesnake).